A 78-amino-acid chain; its full sequence is Major outer membrane lipoprotein Lpp 1 (78 aa).

Positions 1–20 (MNRTKLVLGAVILGSTLLAG) are cleaved as a signal peptide. The N-palmitoyl cysteine moiety is linked to residue Cys-21. Cys-21 carries the S-diacylglycerol cysteine lipid modification. 2 consecutive repeats follow at residues 24–34 (NAKIDQLSSDV) and 38–48 (NAKVDQLSNDV). A coiled-coil region spans residues 27–75 (IDQLSSDVQTLNAKVDQLSNDVNAMRSDVQAAKDDAARANQRLDNQATK). The tract at residues 56 to 78 (QAAKDDAARANQRLDNQATKYRK) is disordered. The segment covering 68–78 (RLDNQATKYRK) has biased composition (polar residues). N6-murein peptidoglycan lysine is present on Lys-78.

It belongs to the Lpp family. Homotrimer.

Its subcellular location is the cell outer membrane. The protein localises to the secreted. The protein resides in the cell wall. A highly abundant outer membrane lipoprotein that controls the distance between the inner and outer membranes. The only protein known to be covalently linked to the peptidoglycan network (PGN). Also non-covalently binds the PGN. The link between the cell outer membrane and PGN contributes to maintenance of the structural and functional integrity of the cell envelope, and maintains the correct distance between the PGN and the outer membrane. This Salmonella paratyphi A (strain ATCC 9150 / SARB42) protein is Major outer membrane lipoprotein Lpp 1.